A 728-amino-acid polypeptide reads, in one-letter code: FAS1 domain-containing protein fsc1 (728 aa).

Positions Met-1–Gly-21 are cleaved as a signal peptide. Residues Lys-22–Thr-670 lie on the Vacuolar side of the membrane. FAS1 domains are found at residues Ser-29–Ile-151 and Pro-154–Ile-285. Asn-89 is a glycosylation site (N-linked (GlcNAc...) asparagine). 2 N-linked (GlcNAc...) asparagine glycosylation sites follow: Asn-404 and Asn-501. Residues Phe-671–Tyr-691 form a helical membrane-spanning segment. The Cytoplasmic segment spans residues Phe-692–Val-728.

Its subcellular location is the vacuole membrane. Its function is as follows. Required for the fusion of autophagosomes with the vacuole. In Schizosaccharomyces pombe (strain 972 / ATCC 24843) (Fission yeast), this protein is FAS1 domain-containing protein fsc1 (fsc1).